We begin with the raw amino-acid sequence, 545 residues long: Glucose-6-phosphate isomerase (545 aa).

The Proton donor role is filled by Glu-351. Catalysis depends on residues His-382 and Lys-510.

Belongs to the GPI family.

Its subcellular location is the cytoplasm. The enzyme catalyses alpha-D-glucose 6-phosphate = beta-D-fructose 6-phosphate. It functions in the pathway carbohydrate biosynthesis; gluconeogenesis. Its pathway is carbohydrate degradation; glycolysis; D-glyceraldehyde 3-phosphate and glycerone phosphate from D-glucose: step 2/4. In terms of biological role, catalyzes the reversible isomerization of glucose-6-phosphate to fructose-6-phosphate. The sequence is that of Glucose-6-phosphate isomerase from Shewanella putrefaciens (strain CN-32 / ATCC BAA-453).